Here is a 115-residue protein sequence, read N- to C-terminus: Thiosulfate:glutathione sulfurtransferase (115 aa).

A Rhodanese domain is found at 17-115 (ASGRARLFDV…AYREWLEKES (99 aa)). The Cysteine persulfide intermediate role is filled by C79.

As to expression, highly expressed in kidney, liver and skeletal muscle. Lower levels of expression in heart, colon, thymus, spleen, placenta and lung. Weakly expressed in brain, small intestine and peripheral blood leukocytes. Expressed at high levels in the breast carcinoma cell lines MCF-7 and MDA-MB-468 and at a lower level in the breast carcinoma cell line MDA-MB-231, the colon carcinoma call line LoVo and the lung carcinoma cell line A-549. No expression in the cell lines EFO-27 and HeLa, or the normal breast tissue cell lines MCF-10A and H184A1. Detected in invasive ductal carcinoma, but not in the adjacent tissues.

The protein resides in the cytoplasm. It is found in the perinuclear region. It catalyses the reaction thiosulfate + glutathione = S-sulfanylglutathione + sulfite + H(+). The enzyme catalyses thiosulfate + 2 glutathione = glutathione disulfide + hydrogen sulfide + sulfite + 2 H(+). GSS(-) is a potent inhibitor of TSTD1, since the presence of the sulfur dioxygenase (SDO) strongly increases the TSTD1 catalytic activity. Functionally, thiosulfate:glutathione sulfurtransferase (TST) required to produce S-sulfanylglutathione (GSS(-)), a central intermediate in hydrogen sulfide metabolism. Provides the link between the first step in mammalian H(2)S metabolism performed by the sulfide:quinone oxidoreductase (SQOR) which catalyzes the conversion of H(2)S to thiosulfate, and the sulfur dioxygenase (SDO) which uses GSS(-) as substrate. The thermodynamic coupling of the irreversible SDO and reversible TST reactions provides a model for the physiologically relevant reaction with thiosulfate as the sulfane donor. GSS(-) spontaneously reacts with glutathione to form glutathione disulfide. In Homo sapiens (Human), this protein is Thiosulfate:glutathione sulfurtransferase (TSTD1).